The chain runs to 146 residues: MGGTTDFVLSITIVLVILIIIAFIWYNFTGWSPFKYSKGNTVTFKTPDESSIAYMRFRNCIFTFTDPKGSLHSIDVTEVLNNMAKGFRDAQNPPSSFTLGGHCQAPLNAFSFVLPGVNDRATVATADDAKKWENCDATLTGLQRII.

A helical transmembrane segment spans residues 7 to 27 (FVLSITIVLVILIIIAFIWYN).

Belongs to the asfivirus E146L family.

The protein resides in the host membrane. Its subcellular location is the virion. This is an uncharacterized protein from African swine fever virus (strain Badajoz 1971 Vero-adapted) (Ba71V).